Here is a 159-residue protein sequence, read N- to C-terminus: Cell division protein SepF (159 aa).

The interval 23-69 is disordered; sequence DYIEEDEEQKPASKSAFDSDHTVTPLASTTAPAASSTTKPFPGGRVN. Residues 44-64 are compositionally biased toward low complexity; it reads TVTPLASTTAPAASSTTKPFP.

It belongs to the SepF family. In terms of assembly, homodimer. Interacts with FtsZ.

Its subcellular location is the cytoplasm. Its function is as follows. Cell division protein that is part of the divisome complex and is recruited early to the Z-ring. Probably stimulates Z-ring formation, perhaps through the cross-linking of FtsZ protofilaments. Its function overlaps with FtsA. This is Cell division protein SepF from Bifidobacterium longum (strain DJO10A).